Here is a 483-residue protein sequence, read N- to C-terminus: MKFIIKLFPEITIKSQSVRLRFIKILTSNIRNILKHCDESVAVVRHWDHIEVRAGDEQHRPLVADALTLIPGIHHILAVEERPWQDMHDIYLQTLVMYRDRLVGKSFCVRVKRRGTHDFTSQDVERYVGGGLNQNVDNTRVKLTHPDETVLLEIDNDRLLLITERLEGLGGFPIGTQEDVLSLISGGFDSGVSSYMLMRRGCRVNYCFFNLGGAAHEIGVRQVAHHLWRRFGQSHKVRFVSLDFAPVVNEILAKVEDGQMGIVLKRMMVRAASAIAERYGIQALVTGEALGQVSSQTLTNLRLIDNASDTLILRPLISHDKEHIITLAHQIGTEEYAKTMPEYCGVISKSPTVRAVKSRIEQEEGQFDFAVLETAVAQAQVVDIRELVAEEGNAPVAEVETTAELGSGDVVLDIRSQDEQEGCPLTLANVAVQTLPFYKLGSHFGELDQSKLYLLYCDRGVMSRLQALYLREQGFQNVKVYRP.

The region spanning 61–165 is the THUMP domain; it reads PLVADALTLI…NDRLLLITER (105 aa). Residues 183–184, Lys265, Gly287, and Gln296 each bind ATP; that span reads LI. Cysteines 344 and 457 form a disulfide. The Rhodanese domain occupies 405–483; it reads LGSGDVVLDI…GFQNVKVYRP (79 aa). Cys457 acts as the Cysteine persulfide intermediate in catalysis.

Belongs to the ThiI family.

The protein resides in the cytoplasm. It carries out the reaction [ThiI sulfur-carrier protein]-S-sulfanyl-L-cysteine + a uridine in tRNA + 2 reduced [2Fe-2S]-[ferredoxin] + ATP + H(+) = [ThiI sulfur-carrier protein]-L-cysteine + a 4-thiouridine in tRNA + 2 oxidized [2Fe-2S]-[ferredoxin] + AMP + diphosphate. The catalysed reaction is [ThiS sulfur-carrier protein]-C-terminal Gly-Gly-AMP + S-sulfanyl-L-cysteinyl-[cysteine desulfurase] + AH2 = [ThiS sulfur-carrier protein]-C-terminal-Gly-aminoethanethioate + L-cysteinyl-[cysteine desulfurase] + A + AMP + 2 H(+). Its pathway is cofactor biosynthesis; thiamine diphosphate biosynthesis. In terms of biological role, catalyzes the ATP-dependent transfer of a sulfur to tRNA to produce 4-thiouridine in position 8 of tRNAs, which functions as a near-UV photosensor. Also catalyzes the transfer of sulfur to the sulfur carrier protein ThiS, forming ThiS-thiocarboxylate. This is a step in the synthesis of thiazole, in the thiamine biosynthesis pathway. The sulfur is donated as persulfide by IscS. The polypeptide is tRNA sulfurtransferase (Sodalis glossinidius (strain morsitans)).